The chain runs to 20 residues: Pregnancy-associated glycoprotein 71D (20 aa).

N4 is a glycosylation site (N-linked (GlcNAc...) asparagine).

It belongs to the peptidase A1 family. In terms of tissue distribution, chorionic epithelium (trophectoderm) and placental cotyledons.

It localises to the secreted. It is found in the extracellular space. This is Pregnancy-associated glycoprotein 71D from Bison bonasus (European bison).